Here is a 297-residue protein sequence, read N- to C-terminus: Protease HtpX homolog (297 aa).

2 consecutive transmembrane segments (helical) span residues 14-34 and 39-59; these read IFLI…AGYL and YQFG…SMIF. Position 143 (His-143) interacts with Zn(2+). Residue Glu-144 is part of the active site. Residue His-147 participates in Zn(2+) binding. Helical transmembrane passes span 153 to 173 and 196 to 216; these read IRIS…ASMG and IVFL…ASMV. Glu-225 lines the Zn(2+) pocket.

Belongs to the peptidase M48B family. The cofactor is Zn(2+).

The protein localises to the cell membrane. This Streptococcus uberis (strain ATCC BAA-854 / 0140J) protein is Protease HtpX homolog.